We begin with the raw amino-acid sequence, 185 residues long: Alpha-S1-casein (185 aa).

Positions 1-15 (MRLLILTCLVAVALA) are cleaved as a signal peptide. 10 positions are modified to phosphoserine: serine 31, serine 33, serine 41, serine 71, serine 85, serine 86, serine 88, serine 89, serine 90, and serine 91.

Belongs to the alpha-casein family. Heteromultimers of alpha-s1 casein and kappa-casein; disulfide-linked. In terms of processing, not glycosylated. As to expression, mammary gland specific. Secreted in milk.

It localises to the secreted. Its function is as follows. Important role in the capacity of milk to transport calcium phosphate. Casoxin D acts as opioid antagonist and has vasorelaxing activity mediated by bradykinin B1 receptors. The polypeptide is Alpha-S1-casein (CSN1S1) (Homo sapiens (Human)).